The chain runs to 266 residues: F-actin-capping protein subunit beta (266 aa).

This sequence belongs to the F-actin-capping protein beta subunit family. As to quaternary structure, component of the F-actin capping complex, composed of a heterodimer of an alpha and a beta subunit.

The protein resides in the cytoplasm. The protein localises to the cytoskeleton. Its subcellular location is the actin patch. Its function is as follows. F-actin-capping proteins bind in a Ca(2+)-independent manner to the fast growing ends of actin filaments (barbed end) thereby blocking the exchange of subunits at these ends. Unlike other capping proteins (such as gelsolin and severin), these proteins do not sever actin filaments. This Emericella nidulans (strain FGSC A4 / ATCC 38163 / CBS 112.46 / NRRL 194 / M139) (Aspergillus nidulans) protein is F-actin-capping protein subunit beta (cap2).